Reading from the N-terminus, the 540-residue chain is Signal peptide peptidase-like 2 (540 aa).

The signal sequence occupies residues 1-27 (MDSLRFLRILLLSSSILLLSLRSTVTA). Residues 28-196 (GDIVHQDNLA…PRRPAVDVAE (169 aa)) are Lumenal-facing. Asn-83 carries an N-linked (GlcNAc...) asparagine glycan. In terms of domain architecture, PA spans 95 to 173 (SCTPLKNKLS…QDAGASLQKM (79 aa)). The N-linked (GlcNAc...) asparagine glycan is linked to Asn-176. The chain crosses the membrane as a helical span at residues 197–217 (VFLWLMAIGTILCASYWSAWS). Topologically, residues 218-248 (AREAAIEHDKLLKDAIDEIPNTNDGGSGVVE) are cytoplasmic. A helical membrane pass occupies residues 249–269 (INSISAIFFVVLASGFLVILY). The Lumenal portion of the chain corresponds to 270–278 (KLMSYWFVE). Residues 279–299 (LLVVVFCIGGVEGLQTCLVAL) form a helical membrane-spanning segment. The Cytoplasmic portion of the chain corresponds to 300-319 (LSRWFQRAADTYVKVPFLGP). A helical transmembrane segment spans residues 320 to 340 (ISYLTLAVSPFCIVFAVLWAV). The Lumenal portion of the chain corresponds to 341 to 345 (YRVHS). The chain crosses the membrane as a helical span at residues 346 to 366 (FAWIGQDVLGIALIITVLQIV). The Cytoplasmic portion of the chain corresponds to 367–370 (HVPN). The chain crosses the membrane as a helical span at residues 371–391 (LKVGTVLLSCAFLYDIFWVFV). Asp-385 is an active-site residue. At 392-429 (SKKLFHESVMIVVARGDKSGEDGIPMLLKIPRMFDPWG) the chain is on the lumenal side. The helical transmembrane segment at 430–450 (GYSIIGFGDILLPGLLIAFAL) threads the bilayer. Residue Asp-438 is part of the active site. At 451 to 462 (RYDWLANKTLRT) the chain is on the cytoplasmic side. Residues 463–483 (GYFIWAMVAYGLGLLITYVAL) traverse the membrane as a helical segment. The Lumenal portion of the chain corresponds to 484–488 (NLMDG). A helical membrane pass occupies residues 489 to 509 (HGQPALLYIVPFTLGTMLTLA). A PAL motif is present at residues 492–494 (PAL). Topologically, residues 510–540 (RKRDDLWILWTKGEPERACPHHVRLEQCSEK) are cytoplasmic.

It belongs to the peptidase A22B family. In terms of processing, glycosylated. In terms of tissue distribution, ubiquitous.

It is found in the endosome membrane. Functionally, intramembrane-cleaving aspartic protease (I-CLiP) that cleaves type II membrane signal peptides in the hydrophobic plane of the membrane. The protein is Signal peptide peptidase-like 2 (SPPL2) of Arabidopsis thaliana (Mouse-ear cress).